We begin with the raw amino-acid sequence, 272 residues long: MWSDILGLALFVSLNPLLLGFILLVLSRPRPVPNLVVFWVGCLIVNVPGFLIPLFVLRAVPSFAEFAEDLTTADPSSGIEPFQLGTGIFALAVSAVIALRMWVKRRANQPVLVGSGAGDRGPTDDASTLVLDSGAREAREPGAIARMILRMRSALQRLVSRLHQEWENGALWVALVFGLAYIPPPPLVLLVDTIIGGSGAPIGTQIIAVFVFIMAMLAVFEITLLSYVIAPRRTQAVLEPLHEWSHRHRQMILLVLFGAVGIWELIVGLGVI.

The next 6 membrane-spanning stretches (helical) occupy residues 5 to 25 (ILGL…ILLV), 36 to 56 (VVFW…PLFV), 79 to 99 (IEPF…VIAL), 171 to 191 (LWVA…VLLV), 206 to 226 (IIAV…TLLS), and 252 to 272 (ILLV…LGVI).

This sequence belongs to the peptidoglycolipid addressing protein (GAP) (TC 2.A.116) family.

It localises to the cell inner membrane. In terms of biological role, required for the transport of peptidoglycolipids (GPLs) to the cell surface. In Mycolicibacterium smegmatis (strain ATCC 700084 / mc(2)155) (Mycobacterium smegmatis), this protein is Peptidoglycolipid exporter Gap.